The following is a 68-amino-acid chain: Riparin-1.6 (68 aa).

Positions 1–15 (MKIIVFLAVLMLVSA) are cleaved as a signal peptide. Positions 16-41 (QVCLVSAAEMEHSSDNELSSRDLVKR) are excised as a propeptide. A disulfide bond links Cys-47 and Cys-53. Cysteine amide is present on Cys-53. Positions 57 to 68 (DIESSEGANGGE) are excised as a propeptide.

Expressed by the skin glands.

It is found in the secreted. In Crinia riparia (Streambank froglet), this protein is Riparin-1.6.